The primary structure comprises 70 residues: Small ribosomal subunit protein bS21 (70 aa).

This sequence belongs to the bacterial ribosomal protein bS21 family.

This Sulfurimonas denitrificans (strain ATCC 33889 / DSM 1251) (Thiomicrospira denitrificans (strain ATCC 33889 / DSM 1251)) protein is Small ribosomal subunit protein bS21.